The primary structure comprises 149 residues: MKIIIDGDGCAGRDIIEEVGKKHSVKILIYCTINHMINSDYSEVRMVDGGFQSVDMYVANNTEENDIVITQDYGVAAMALGKGALAISPRGYIYDNDNIDRLLFERHLSQKNRRAGGKSKGNHKRNKEDDDRLYYNLEVLIEKVKAILN.

The protein belongs to the UPF0178 family.

This is UPF0178 protein CPF_2548 from Clostridium perfringens (strain ATCC 13124 / DSM 756 / JCM 1290 / NCIMB 6125 / NCTC 8237 / Type A).